Consider the following 129-residue polypeptide: uncharacterized protein (129 aa).

Residues 33–50 (MGGNVMWFIALLFALLIA) form a helical membrane-spanning segment.

Its subcellular location is the membrane. This is an uncharacterized protein from Saccharomyces cerevisiae (strain ATCC 204508 / S288c) (Baker's yeast).